A 981-amino-acid polypeptide reads, in one-letter code: Peroxisomal ATPase PEX6 (981 aa).

Position 119 is an omega-N-methylarginine (Arg119). Residues 471 to 478 (GPPGSGKT) and 745 to 752 (GPPGTGKT) each bind ATP.

The protein belongs to the AAA ATPase family. In terms of assembly, interacts with PEX1; forming the PEX1-PEX6 AAA ATPase complex, which is composed of a heterohexamer formed by a trimer of PEX1-PEX6 dimers. Interacts with PEX26; interaction is direct and promotes recruitment to peroxisomal membranes. Interacts with ZFAND6. In the teeth, expressed in ameloblasts and odontoblasts. Expressed in the retina, at higher levels in the ganglion cell layer and photoreceptor layer at the joint between the outer and inner segments.

The protein resides in the cytoplasm. Its subcellular location is the cytosol. The protein localises to the peroxisome membrane. It localises to the cell projection. It is found in the cilium. The protein resides in the photoreceptor outer segment. It carries out the reaction ATP + H2O = ADP + phosphate + H(+). In terms of biological role, component of the PEX1-PEX6 AAA ATPase complex, a protein dislocase complex that mediates the ATP-dependent extraction of the PEX5 receptor from peroxisomal membranes, an essential step for PEX5 recycling. Specifically recognizes PEX5 monoubiquitinated at 'Cys-11', and pulls it out of the peroxisome lumen through the PEX2-PEX10-PEX12 retrotranslocation channel. Extraction by the PEX1-PEX6 AAA ATPase complex is accompanied by unfolding of the TPR repeats and release of bound cargo from PEX5. This Mus musculus (Mouse) protein is Peroxisomal ATPase PEX6.